We begin with the raw amino-acid sequence, 153 residues long: 6,7-dimethyl-8-ribityllumazine synthase (153 aa).

Residues phenylalanine 21, 55 to 57 (AFE), and 79 to 81 (TVI) each bind 5-amino-6-(D-ribitylamino)uracil. 84-85 (AT) serves as a coordination point for (2S)-2-hydroxy-3-oxobutyl phosphate. The Proton donor role is filled by histidine 87. Residue phenylalanine 112 participates in 5-amino-6-(D-ribitylamino)uracil binding. A (2S)-2-hydroxy-3-oxobutyl phosphate-binding site is contributed by arginine 126.

It belongs to the DMRL synthase family. In terms of assembly, forms an icosahedral capsid composed of 60 subunits, arranged as a dodecamer of pentamers.

The catalysed reaction is (2S)-2-hydroxy-3-oxobutyl phosphate + 5-amino-6-(D-ribitylamino)uracil = 6,7-dimethyl-8-(1-D-ribityl)lumazine + phosphate + 2 H2O + H(+). Its pathway is cofactor biosynthesis; riboflavin biosynthesis; riboflavin from 2-hydroxy-3-oxobutyl phosphate and 5-amino-6-(D-ribitylamino)uracil: step 1/2. Its function is as follows. Catalyzes the formation of 6,7-dimethyl-8-ribityllumazine by condensation of 5-amino-6-(D-ribitylamino)uracil with 3,4-dihydroxy-2-butanone 4-phosphate. This is the penultimate step in the biosynthesis of riboflavin. This Bacillus cereus (strain AH187) protein is 6,7-dimethyl-8-ribityllumazine synthase.